The chain runs to 246 residues: Protein phosphatase PhpP (246 aa).

The region spanning 2-240 is the PPM-type phosphatase domain; it reads EISLLTDVGQ…DNITVALVSM (239 aa). Aspartate 36, glycine 37, aspartate 192, and aspartate 231 together coordinate Mn(2+).

It belongs to the PP2C family. The cofactor is Mn(2+).

It localises to the cytoplasm. The catalysed reaction is O-phospho-L-seryl-[protein] + H2O = L-seryl-[protein] + phosphate. It carries out the reaction O-phospho-L-threonyl-[protein] + H2O = L-threonyl-[protein] + phosphate. Functionally, protein phosphatase able to dephosphorylate StkP-P and other phosphorylated protein substrates. PhpP and its cognate protein kinase StkP appear to constitute a functional signaling couple in vivo, PhpP's primary role being probably to control phosphorylation levels of StkP and of its targets. PhpP thus performs an essential control of StkP activity. Also dephosphorylates DivIVA in vivo. The protein is Protein phosphatase PhpP (phpP) of Streptococcus pneumoniae serotype 2 (strain D39 / NCTC 7466).